The sequence spans 227 residues: NAD(P)H-quinone oxidoreductase subunit K, chloroplastic (227 aa).

Positions 43, 44, 108, and 139 each coordinate [4Fe-4S] cluster.

It belongs to the complex I 20 kDa subunit family. As to quaternary structure, NDH is composed of at least 16 different subunits, 5 of which are encoded in the nucleus. [4Fe-4S] cluster is required as a cofactor.

The protein resides in the plastid. Its subcellular location is the chloroplast thylakoid membrane. It carries out the reaction a plastoquinone + NADH + (n+1) H(+)(in) = a plastoquinol + NAD(+) + n H(+)(out). It catalyses the reaction a plastoquinone + NADPH + (n+1) H(+)(in) = a plastoquinol + NADP(+) + n H(+)(out). In terms of biological role, NDH shuttles electrons from NAD(P)H:plastoquinone, via FMN and iron-sulfur (Fe-S) centers, to quinones in the photosynthetic chain and possibly in a chloroplast respiratory chain. It has NADH- and deamino-NADH-specific dehydrogenase activity, using ferricyanide or quinones as acceptors. The immediate electron acceptor for the enzyme in this species is believed to be plastoquinone. Couples the redox reaction to proton translocation, and thus conserves the redox energy in a proton gradient. The sequence is that of NAD(P)H-quinone oxidoreductase subunit K, chloroplastic from Pisum sativum (Garden pea).